A 255-amino-acid polypeptide reads, in one-letter code: Thiazole synthase (255 aa).

Lysine 96 functions as the Schiff-base intermediate with DXP in the catalytic mechanism. Residues glycine 157, alanine 183–glycine 184, and asparagine 205–threonine 206 each bind 1-deoxy-D-xylulose 5-phosphate.

This sequence belongs to the ThiG family. In terms of assembly, homotetramer. Forms heterodimers with either ThiH or ThiS.

The protein resides in the cytoplasm. The catalysed reaction is [ThiS sulfur-carrier protein]-C-terminal-Gly-aminoethanethioate + 2-iminoacetate + 1-deoxy-D-xylulose 5-phosphate = [ThiS sulfur-carrier protein]-C-terminal Gly-Gly + 2-[(2R,5Z)-2-carboxy-4-methylthiazol-5(2H)-ylidene]ethyl phosphate + 2 H2O + H(+). The protein operates within cofactor biosynthesis; thiamine diphosphate biosynthesis. Catalyzes the rearrangement of 1-deoxy-D-xylulose 5-phosphate (DXP) to produce the thiazole phosphate moiety of thiamine. Sulfur is provided by the thiocarboxylate moiety of the carrier protein ThiS. In vitro, sulfur can be provided by H(2)S. The chain is Thiazole synthase from Staphylococcus haemolyticus (strain JCSC1435).